The sequence spans 485 residues: Regulatory protein ViaA (485 aa).

Belongs to the ViaA family. In terms of assembly, homodimer. Interacts with RavA.

Its subcellular location is the cytoplasm. Functionally, component of the RavA-ViaA chaperone complex, which may act on the membrane to optimize the function of some of the respiratory chains. ViaA stimulates the ATPase activity of RavA. The protein is Regulatory protein ViaA of Proteus mirabilis (strain HI4320).